Reading from the N-terminus, the 150-residue chain is Large ribosomal subunit protein bL9 (150 aa).

Belongs to the bacterial ribosomal protein bL9 family.

Binds to the 23S rRNA. This is Large ribosomal subunit protein bL9 from Neisseria meningitidis serogroup C (strain 053442).